We begin with the raw amino-acid sequence, 121 residues long: Large ribosomal subunit protein bL12 (121 aa).

It belongs to the bacterial ribosomal protein bL12 family. As to quaternary structure, homodimer. Part of the ribosomal stalk of the 50S ribosomal subunit. Forms a multimeric L10(L12)X complex, where L10 forms an elongated spine to which 2 to 4 L12 dimers bind in a sequential fashion. Binds GTP-bound translation factors.

Its function is as follows. Forms part of the ribosomal stalk which helps the ribosome interact with GTP-bound translation factors. Is thus essential for accurate translation. The protein is Large ribosomal subunit protein bL12 of Streptococcus equi subsp. equi (strain 4047).